A 146-amino-acid polypeptide reads, in one-letter code: Large ribosomal subunit protein uL15 (146 aa).

Positions 1–54 are disordered; that stretch reads MTIKLHDLRPAPGSKTPRTRVGRGEGSKGKTAGRGTKGTKARKQVPTTFEGGQM.

Belongs to the universal ribosomal protein uL15 family. As to quaternary structure, part of the 50S ribosomal subunit.

Binds to the 23S rRNA. This chain is Large ribosomal subunit protein uL15, found in Mycobacterium ulcerans (strain Agy99).